A 284-amino-acid polypeptide reads, in one-letter code: Lipoyl synthase (284 aa).

7 residues coordinate [4Fe-4S] cluster: C36, C41, C47, C62, C66, C69, and S273. A Radical SAM core domain is found at 48 to 262 (WGKGTATFMI…RTIGLKKGFR (215 aa)).

It belongs to the radical SAM superfamily. Lipoyl synthase family. Requires [4Fe-4S] cluster as cofactor.

It localises to the cytoplasm. The enzyme catalyses [[Fe-S] cluster scaffold protein carrying a second [4Fe-4S](2+) cluster] + N(6)-octanoyl-L-lysyl-[protein] + 2 oxidized [2Fe-2S]-[ferredoxin] + 2 S-adenosyl-L-methionine + 4 H(+) = [[Fe-S] cluster scaffold protein] + N(6)-[(R)-dihydrolipoyl]-L-lysyl-[protein] + 4 Fe(3+) + 2 hydrogen sulfide + 2 5'-deoxyadenosine + 2 L-methionine + 2 reduced [2Fe-2S]-[ferredoxin]. The protein operates within protein modification; protein lipoylation via endogenous pathway; protein N(6)-(lipoyl)lysine from octanoyl-[acyl-carrier-protein]: step 2/2. Functionally, catalyzes the radical-mediated insertion of two sulfur atoms into the C-6 and C-8 positions of the octanoyl moiety bound to the lipoyl domains of lipoate-dependent enzymes, thereby converting the octanoylated domains into lipoylated derivatives. This Phocaeicola vulgatus (strain ATCC 8482 / DSM 1447 / JCM 5826 / CCUG 4940 / NBRC 14291 / NCTC 11154) (Bacteroides vulgatus) protein is Lipoyl synthase.